A 155-amino-acid polypeptide reads, in one-letter code: Molybdopterin synthase catalytic subunit 1 (155 aa).

Residues 101-102 (HR), Lys-117, and 124-126 (KKE) each bind substrate.

It belongs to the MoaE family. MOCS2B subfamily. In terms of assembly, heterotetramer; composed of 2 small (MOCS2A) and 2 large (MOCS2B) subunits.

It localises to the cytoplasm. The enzyme catalyses 2 [molybdopterin-synthase sulfur-carrier protein]-C-terminal-Gly-aminoethanethioate + cyclic pyranopterin phosphate + H2O = molybdopterin + 2 [molybdopterin-synthase sulfur-carrier protein]-C-terminal Gly-Gly + 2 H(+). It participates in cofactor biosynthesis; molybdopterin biosynthesis. Its function is as follows. Catalytic subunit of the molybdopterin synthase complex, a complex that catalyzes the conversion of precursor Z into molybdopterin. Acts by mediating the incorporation of 2 sulfur atoms from thiocarboxylated MOCS2A into precursor Z to generate a dithiolene group. The chain is Molybdopterin synthase catalytic subunit 1 from Aedes aegypti (Yellowfever mosquito).